The primary structure comprises 494 residues: Ketol-acid reductoisomerase (NADP(+)) (494 aa).

Residues 14–208 (LEQLGKCRFM…GGHRAGVLQS (195 aa)) enclose the KARI N-terminal Rossmann domain. NADP(+)-binding positions include 45–48 (CGAQ), Arg-68, Arg-76, Ser-78, and 108–110 (DKQ). The active site involves His-132. An NADP(+)-binding site is contributed by Gly-158. KARI C-terminal knotted domains follow at residues 209–344 (SFVA…NAPA) and 345–487 (FDGA…MKDM). Residues Asp-217, Glu-221, Glu-389, and Glu-393 each coordinate Mg(2+). Ser-414 contacts substrate.

Belongs to the ketol-acid reductoisomerase family. Requires Mg(2+) as cofactor.

The enzyme catalyses (2R)-2,3-dihydroxy-3-methylbutanoate + NADP(+) = (2S)-2-acetolactate + NADPH + H(+). It carries out the reaction (2R,3R)-2,3-dihydroxy-3-methylpentanoate + NADP(+) = (S)-2-ethyl-2-hydroxy-3-oxobutanoate + NADPH + H(+). Its pathway is amino-acid biosynthesis; L-isoleucine biosynthesis; L-isoleucine from 2-oxobutanoate: step 2/4. The protein operates within amino-acid biosynthesis; L-valine biosynthesis; L-valine from pyruvate: step 2/4. In terms of biological role, involved in the biosynthesis of branched-chain amino acids (BCAA). Catalyzes an alkyl-migration followed by a ketol-acid reduction of (S)-2-acetolactate (S2AL) to yield (R)-2,3-dihydroxy-isovalerate. In the isomerase reaction, S2AL is rearranged via a Mg-dependent methyl migration to produce 3-hydroxy-3-methyl-2-ketobutyrate (HMKB). In the reductase reaction, this 2-ketoacid undergoes a metal-dependent reduction by NADPH to yield (R)-2,3-dihydroxy-isovalerate. This Tolumonas auensis (strain DSM 9187 / NBRC 110442 / TA 4) protein is Ketol-acid reductoisomerase (NADP(+)).